A 428-amino-acid chain; its full sequence is Light-independent protochlorophyllide reductase subunit N (428 aa).

Positions 29, 54, and 115 each coordinate [4Fe-4S] cluster.

Belongs to the BchN/ChlN family. As to quaternary structure, protochlorophyllide reductase is composed of three subunits; BchL, BchN and BchB. Forms a heterotetramer of two BchB and two BchN subunits. [4Fe-4S] cluster serves as cofactor.

The enzyme catalyses chlorophyllide a + oxidized 2[4Fe-4S]-[ferredoxin] + 2 ADP + 2 phosphate = protochlorophyllide a + reduced 2[4Fe-4S]-[ferredoxin] + 2 ATP + 2 H2O. It participates in porphyrin-containing compound metabolism; bacteriochlorophyll biosynthesis (light-independent). In terms of biological role, component of the dark-operative protochlorophyllide reductase (DPOR) that uses Mg-ATP and reduced ferredoxin to reduce ring D of protochlorophyllide (Pchlide) to form chlorophyllide a (Chlide). This reaction is light-independent. The NB-protein (BchN-BchB) is the catalytic component of the complex. This Cereibacter sphaeroides (strain KD131 / KCTC 12085) (Rhodobacter sphaeroides) protein is Light-independent protochlorophyllide reductase subunit N.